The following is a 343-amino-acid chain: Selenide, water dikinase (343 aa).

Residue C15 is part of the active site. ATP is bound by residues K18 and 46–48 (NKD). D49 contacts Mg(2+). Residues D66, D89, and 137–139 (GHS) each bind ATP. D89 is a binding site for Mg(2+). D225 lines the Mg(2+) pocket.

Belongs to the selenophosphate synthase 1 family. Class I subfamily. In terms of assembly, homodimer. It depends on Mg(2+) as a cofactor.

The catalysed reaction is hydrogenselenide + ATP + H2O = selenophosphate + AMP + phosphate + 2 H(+). Functionally, synthesizes selenophosphate from selenide and ATP. This Sulfurovum sp. (strain NBC37-1) protein is Selenide, water dikinase.